The following is a 167-amino-acid chain: UPF0262 protein Nwi_0248 (167 aa).

It belongs to the UPF0262 family.

The polypeptide is UPF0262 protein Nwi_0248 (Nitrobacter winogradskyi (strain ATCC 25391 / DSM 10237 / CIP 104748 / NCIMB 11846 / Nb-255)).